Here is a 238-residue protein sequence, read N- to C-terminus: Probable transcriptional regulatory protein VPA0011 (238 aa).

Belongs to the TACO1 family.

It localises to the cytoplasm. In Vibrio parahaemolyticus serotype O3:K6 (strain RIMD 2210633), this protein is Probable transcriptional regulatory protein VPA0011.